Consider the following 456-residue polypeptide: tRNA modification GTPase MnmE (456 aa).

3 residues coordinate (6S)-5-formyl-5,6,7,8-tetrahydrofolate: R24, E81, and K120. The region spanning 216 to 379 (GMTVVIAGRP…LREHLKACMG (164 aa)) is the TrmE-type G domain. Residue N226 participates in K(+) binding. GTP contacts are provided by residues 226–231 (NAGKSS), 245–251 (TEIAGTT), 270–273 (DTAG), 335–338 (NKAD), and 359–361 (SAR). A Mg(2+)-binding site is contributed by S230. The K(+) site is built by T245, I247, and T250. Residue T251 participates in Mg(2+) binding. K456 is a binding site for (6S)-5-formyl-5,6,7,8-tetrahydrofolate.

The protein belongs to the TRAFAC class TrmE-Era-EngA-EngB-Septin-like GTPase superfamily. TrmE GTPase family. As to quaternary structure, homodimer. Heterotetramer of two MnmE and two MnmG subunits. Requires K(+) as cofactor.

Its subcellular location is the cytoplasm. In terms of biological role, exhibits a very high intrinsic GTPase hydrolysis rate. Involved in the addition of a carboxymethylaminomethyl (cmnm) group at the wobble position (U34) of certain tRNAs, forming tRNA-cmnm(5)s(2)U34. This Pseudomonas syringae pv. tomato (strain ATCC BAA-871 / DC3000) protein is tRNA modification GTPase MnmE.